Here is a 1196-residue protein sequence, read N- to C-terminus: MSVMEPLSANRTAQFRTLEREARFVSPPKDKSAYPLLYEAVEPHVGSFNALTEGPGGGLLNLGARDIGAKVVFDGKASDENPNYLGNKLALSVTQVSLTKPMSNDGVTAAAERNVFPAEARKRLTTYRGKLLLKLNWSVNDGEETFSEVRDCGPLPVMLQSNRCHLHKMSPQELVEHKEESDELGGYFIVNGIEKLIRMLIVQRRNHPMAIIRPSFANRGTSYSHYGVQIRCVRPDQTSQTNVLHYLNDGQVTFRFSWRKNEYLVPVVLILKALTDASDREIFDGIVGADTSNSFLTDRLELLLRGFKKRFPQLLNRRQVLQYLGDKFRVVLQASPDMSDYLVGQELLRRIVLVHLGDENTDKSNMLMFMIRKLYSLVAGECCPDNPDATQHQEVLLGGFLYGMIVKEKIEEYLQNIKLQIQADVNRGMPVDFKDRKYMTRVLTRINENIGSKLQYFLSTGNLVSQSGLDLQQVSGYTVVAEKINFYRFISHFRMVHRGSFFAQLKTTTVRKLLPESWGFLCPVHTPDGSPCGLLNHFAHKCKISTTQSDVSKIPTLLYSLGVSPAAHVTAAGPSLCCVQLDGKIVGWCSHEQGRIVADTLRYWKVEGKTDGLPLDLEIGYVPASKRGQYPGLYLFGGHSRMMRPVRYLPLDKQDIVGPFEQVYMDIAVTPEEIQNNVHTHVEFSPTNILSILANLTPFSDFNQSPRNMYQCQMGKQTMGTPGVALCHRSDNKLYRLQSGQTPIVKANLYDDYGMDNFPNGTNAVVAVISYTGYDMDDAMIINKSADERGFSYGTVYKTEKIDLSLSRGRGDPVTQHFGFGTDEWPKEWLEKLDEDGLPIIGSYVEEGDPICAYFDDTLNKTKIKTYHSSEPAYIEEVTLIGDESNKFQELQYITIKYRIRRVPQIGDKFSSRHGQKGVCSRKWPTVDMPFSETGIQPDVIINPHAFPSRMTIGMFVESLAGKAGALHGIAQDATPWTFSEEDTPADYFGDQLLKAGYNYHGNEPMYSGATGEELRADIYIGVVYYQRLRHMVNDKFQVRSTGPVNSLTMQPVKGRKRHGGIRVGEMERDALIGHGTSFLLQDRLLNSSDYTQSAVCRECGSILTTQSSVPKIGSMVTIRCRRCAISFDEAKKIITQQDSEDSIFIDDSHIWEDGQGNKFVGGGNTTTVAIPFVLKYLDSELAAMGIRLRYNVDPK.

The C4-type zinc finger occupies 1097 to 1124 (CRECGSILTTQSSVPKIGSMVTIRCRRC).

This sequence belongs to the RNA polymerase beta chain family. Component of the RNA polymerase I (Pol I) complex consisting of 14 subunits.

The protein resides in the nucleus. The protein localises to the nucleolus. It catalyses the reaction RNA(n) + a ribonucleoside 5'-triphosphate = RNA(n+1) + diphosphate. DNA-dependent RNA polymerase catalyzes the transcription of DNA into RNA using the four ribonucleoside triphosphates as substrates. Second largest core component of RNA polymerase I which synthesizes ribosomal RNA precursors. Proposed to contribute to the polymerase catalytic activity and forms the polymerase active center together with the largest subunit. Pol I is composed of mobile elements and RPA2 is part of the core element with the central large cleft and probably a clamp element that moves to open and close the cleft. The protein is DNA-directed RNA polymerase I subunit RPA2 (RPA2) of Eremothecium gossypii (strain ATCC 10895 / CBS 109.51 / FGSC 9923 / NRRL Y-1056) (Yeast).